Here is a 431-residue protein sequence, read N- to C-terminus: Adenylosuccinate lyase (431 aa).

Residues 4 to 5 (RY), 67 to 69 (NHD), and 93 to 94 (TS) each bind N(6)-(1,2-dicarboxyethyl)-AMP. His-141 acts as the Proton donor/acceptor in catalysis. A N(6)-(1,2-dicarboxyethyl)-AMP-binding site is contributed by Gln-212. The Proton donor/acceptor role is filled by Ser-262. Residues Ser-263, 268–270 (KKN), and 307–311 (SVERY) contribute to the N(6)-(1,2-dicarboxyethyl)-AMP site.

It belongs to the lyase 1 family. Adenylosuccinate lyase subfamily. As to quaternary structure, homotetramer. Residues from neighboring subunits contribute catalytic and substrate-binding residues to each active site.

It carries out the reaction N(6)-(1,2-dicarboxyethyl)-AMP = fumarate + AMP. It catalyses the reaction (2S)-2-[5-amino-1-(5-phospho-beta-D-ribosyl)imidazole-4-carboxamido]succinate = 5-amino-1-(5-phospho-beta-D-ribosyl)imidazole-4-carboxamide + fumarate. It functions in the pathway purine metabolism; AMP biosynthesis via de novo pathway; AMP from IMP: step 2/2. Its pathway is purine metabolism; IMP biosynthesis via de novo pathway; 5-amino-1-(5-phospho-D-ribosyl)imidazole-4-carboxamide from 5-amino-1-(5-phospho-D-ribosyl)imidazole-4-carboxylate: step 2/2. Functionally, catalyzes two reactions in de novo purine nucleotide biosynthesis. Catalyzes the breakdown of 5-aminoimidazole- (N-succinylocarboxamide) ribotide (SAICAR or 2-[5-amino-1-(5-phospho-beta-D-ribosyl)imidazole-4-carboxamido]succinate) to 5-aminoimidazole-4-carboxamide ribotide (AICAR or 5-amino-1-(5-phospho-beta-D-ribosyl)imidazole-4-carboxamide) and fumarate, and of adenylosuccinate (ADS or N(6)-(1,2-dicarboxyethyl)-AMP) to adenosine monophosphate (AMP) and fumarate. The sequence is that of Adenylosuccinate lyase (purB) from Thermotoga maritima (strain ATCC 43589 / DSM 3109 / JCM 10099 / NBRC 100826 / MSB8).